The chain runs to 1099 residues: Solute carrier family 12 member 1 (1099 aa).

Topologically, residues 1-177 (MSLNNSSSVF…EDNKAGAVKF (177 aa)) are cytoplasmic. An RFXV motif motif is present at residues 20–23 (RFQV). A phosphoserine mark is found at Ser-60 and Ser-90. 4 positions are modified to phosphothreonine: Thr-94, Thr-99, Thr-104, and Thr-117. Phosphoserine is present on Ser-119. The residue at position 129 (Ser-129) is a Phosphoserine; by AMPK. Ser-147 is subject to Phosphoserine. Positions 147 to 169 (SADRVANGEGMPGEEHAENKEED) are disordered. A compositionally biased stretch (basic and acidic residues) spans 159–169 (GEEHAENKEED). Residues 178-198 (GWVKGVLVRCMLNIWGVMLFI) traverse the membrane as a helical segment. Residues 199–201 (RLS) are Extracellular-facing. A helical membrane pass occupies residues 202–222 (WIVGEAGIGLGVVIILLSTMV). The Cytoplasmic portion of the chain corresponds to 223 to 259 (TSITGLSTSAIATNGFVRGGGAYYLISRSLGPEFGGS). A helical transmembrane segment spans residues 260–280 (IGLIFAFANAVAVAMYVVGFA). At 281 to 302 (ETVVDLLKESDSMMVDPTNDIR) the chain is on the extracellular side. Residues 303–323 (IIGSITVVILLGISVAGMEWE) traverse the membrane as a helical segment. The Cytoplasmic segment spans residues 324 to 327 (AKAQ). A helical membrane pass occupies residues 328–348 (VILLIILLIAIANFFIGTVIP). Topologically, residues 349 to 379 (SNNEKKSRGFFNYQASIFAENFGPSFTKGEG) are extracellular. Residues 380–400 (FFSVFAIFFPAATGILAGANI) form a helical membrane-spanning segment. The Cytoplasmic portion of the chain corresponds to 401–417 (SGDLEDPQDAIPRGTML). The chain crosses the membrane as a helical span at residues 418-438 (AIFITTVAYIGVAICVGACVV). Residues 439–550 (RDATGSMNDT…NNEPLRGYIL (112 aa)) are Extracellular-facing. Asn-446 and Asn-456 each carry an N-linked (GlcNAc...) asparagine glycan. A run of 2 helical transmembrane segments spans residues 551–571 (TFVI…APII) and 572–592 (SNFF…ASYA). At 593 to 609 (KSPGWRPAYGIYNMWVS) the chain is on the extracellular side. Residues 610–630 (LFGAVLCCAVMFVINWWAAVI) traverse the membrane as a helical segment. The Cytoplasmic portion of the chain corresponds to 631-1099 (TYVIEFFLYI…NHKNVLTFYS (469 aa)).

The protein belongs to the SLC12A transporter family. As to quaternary structure, when phosphorylated, interacts with PPP3CB. Phosphorylated at Ser-90, Thr-99 and Thr-104 by OXSR1/OSR1 and STK39/SPAK downstream of WNK kinases (WNK1, WNK2, WNK3 or WNK4), promoting its activity. In terms of tissue distribution, predominant in kidney. The 3 isoforms are differentially distributed within the kidney: B almost exclusively in cortex, F almost exclusively in medulla, and A about equally distributed.

It localises to the apical cell membrane. It catalyses the reaction K(+)(out) + 2 chloride(out) + Na(+)(out) = K(+)(in) + 2 chloride(in) + Na(+)(in). With respect to regulation, activated following phosphorylation by OXSR1/OSR1 and STK39/SPAK downstream of WNK kinases (WNK1, WNK2, WNK3 or WNK4). Its function is as follows. Renal sodium, potassium and chloride ion cotransporter that mediates the transepithelial NaCl reabsorption in the thick ascending limb and plays an essential role in the urinary concentration and volume regulation. Electrically silent transporter system. This chain is Solute carrier family 12 member 1 (SLC12A1), found in Oryctolagus cuniculus (Rabbit).